We begin with the raw amino-acid sequence, 123 residues long: VQ motif-containing protein 29 (123 aa).

A disordered region spans residues Thr24–His55. Positions Ser33–Lys43 are enriched in basic residues. Positions Phe66–Gly75 match the VQ motif. A compositionally biased stretch (basic and acidic residues) spans Pro77–Ala94. Residues Pro77–Trp123 form a disordered region. The span at Ser97–Ser108 shows a compositional bias: low complexity. Residues Trp109–Trp123 show a composition bias toward polar residues.

Its subcellular location is the nucleus. May function as negative regulator of flowering transition. The protein is VQ motif-containing protein 29 of Arabidopsis thaliana (Mouse-ear cress).